A 236-amino-acid polypeptide reads, in one-letter code: MKKKLYEGSSKILYSAEEDFLLIMAFSDKAILETGEIVDISGKGVLNNNISSFLMDKLEMIGIENHFIEKINMREQLIQYVEVFPIQVIISSVACSRFVKEFGIDEGYVFDKPIIDFKVRSREFKYPIVNEYQILNFGWLTRDEIKAVKEQALRIYDFLSGLFIGVGIRLVECKLEFGRVFNGEESIIMLTDEISPDNCRLWHINSNEKLGFELLEKEPNKVFESYQLIADRLKEK.

This sequence belongs to the SAICAR synthetase family.

It carries out the reaction 5-amino-1-(5-phospho-D-ribosyl)imidazole-4-carboxylate + L-aspartate + ATP = (2S)-2-[5-amino-1-(5-phospho-beta-D-ribosyl)imidazole-4-carboxamido]succinate + ADP + phosphate + 2 H(+). The protein operates within purine metabolism; IMP biosynthesis via de novo pathway; 5-amino-1-(5-phospho-D-ribosyl)imidazole-4-carboxamide from 5-amino-1-(5-phospho-D-ribosyl)imidazole-4-carboxylate: step 1/2. This chain is Phosphoribosylaminoimidazole-succinocarboxamide synthase, found in Rickettsia africae (strain ESF-5).